The sequence spans 281 residues: Acetyl-coenzyme A carboxylase carboxyl transferase subunit beta (281 aa).

The interval 1–23 is disordered; that stretch reads MAWFKREKKGISTSTEEKKEAPD. In terms of domain architecture, CoA carboxyltransferase N-terminal spans 25-281; it reads LWNKCPNCKK…LAAFLKMMKN (257 aa). 4 residues coordinate Zn(2+): Cys-29, Cys-32, Cys-48, and Cys-51. The C4-type zinc-finger motif lies at 29 to 51; sequence CPNCKKALHSADLLENKYVCQYC.

It belongs to the AccD/PCCB family. Acetyl-CoA carboxylase is a heterohexamer composed of biotin carboxyl carrier protein (AccB), biotin carboxylase (AccC) and two subunits each of ACCase subunit alpha (AccA) and ACCase subunit beta (AccD). The cofactor is Zn(2+).

It localises to the cytoplasm. It catalyses the reaction N(6)-carboxybiotinyl-L-lysyl-[protein] + acetyl-CoA = N(6)-biotinyl-L-lysyl-[protein] + malonyl-CoA. It functions in the pathway lipid metabolism; malonyl-CoA biosynthesis; malonyl-CoA from acetyl-CoA: step 1/1. Component of the acetyl coenzyme A carboxylase (ACC) complex. Biotin carboxylase (BC) catalyzes the carboxylation of biotin on its carrier protein (BCCP) and then the CO(2) group is transferred by the transcarboxylase to acetyl-CoA to form malonyl-CoA. The polypeptide is Acetyl-coenzyme A carboxylase carboxyl transferase subunit beta (Pedobacter heparinus (strain ATCC 13125 / DSM 2366 / CIP 104194 / JCM 7457 / NBRC 12017 / NCIMB 9290 / NRRL B-14731 / HIM 762-3)).